We begin with the raw amino-acid sequence, 126 residues long: Holo-[acyl-carrier-protein] synthase (126 aa).

Residues Asp-9 and Glu-58 each contribute to the Mg(2+) site.

This sequence belongs to the P-Pant transferase superfamily. AcpS family. It depends on Mg(2+) as a cofactor.

It is found in the cytoplasm. It carries out the reaction apo-[ACP] + CoA = holo-[ACP] + adenosine 3',5'-bisphosphate + H(+). Functionally, transfers the 4'-phosphopantetheine moiety from coenzyme A to a Ser of acyl-carrier-protein. The sequence is that of Holo-[acyl-carrier-protein] synthase from Salmonella paratyphi B (strain ATCC BAA-1250 / SPB7).